The sequence spans 312 residues: Malate dehydrogenase (312 aa).

NAD(+)-binding positions include 7–13 (GAAGGIG) and D34. 2 residues coordinate substrate: R81 and R87. NAD(+) contacts are provided by residues N94 and 117 to 119 (ITN). Residues N119 and R153 each contribute to the substrate site. The active-site Proton acceptor is the H177. M227 is a binding site for NAD(+).

It belongs to the LDH/MDH superfamily. MDH type 1 family. Homodimer.

The enzyme catalyses (S)-malate + NAD(+) = oxaloacetate + NADH + H(+). Functionally, catalyzes the reversible oxidation of malate to oxaloacetate. This is Malate dehydrogenase from Enterobacter sp. (strain 638).